Here is a 415-residue protein sequence, read N- to C-terminus: Serine hydroxymethyltransferase 1 (415 aa).

(6S)-5,6,7,8-tetrahydrofolate-binding positions include Leu122 and 126–128 (GHL). Lys230 bears the N6-(pyridoxal phosphate)lysine mark.

This sequence belongs to the SHMT family. In terms of assembly, homodimer. Pyridoxal 5'-phosphate is required as a cofactor.

It is found in the cytoplasm. The enzyme catalyses (6R)-5,10-methylene-5,6,7,8-tetrahydrofolate + glycine + H2O = (6S)-5,6,7,8-tetrahydrofolate + L-serine. The protein operates within one-carbon metabolism; tetrahydrofolate interconversion. Its pathway is amino-acid biosynthesis; glycine biosynthesis; glycine from L-serine: step 1/1. Functionally, catalyzes the reversible interconversion of serine and glycine with tetrahydrofolate (THF) serving as the one-carbon carrier. This reaction serves as the major source of one-carbon groups required for the biosynthesis of purines, thymidylate, methionine, and other important biomolecules. Also exhibits THF-independent aldolase activity toward beta-hydroxyamino acids, producing glycine and aldehydes, via a retro-aldol mechanism. The polypeptide is Serine hydroxymethyltransferase 1 (Ralstonia nicotianae (strain ATCC BAA-1114 / GMI1000) (Ralstonia solanacearum)).